The primary structure comprises 413 residues: Serine hydroxymethyltransferase (413 aa).

Residues Leu119 and 123-125 (GHL) each bind (6S)-5,6,7,8-tetrahydrofolate. The residue at position 228 (Lys228) is an N6-(pyridoxal phosphate)lysine. 351–353 (SPF) contributes to the (6S)-5,6,7,8-tetrahydrofolate binding site.

This sequence belongs to the SHMT family. As to quaternary structure, homodimer. It depends on pyridoxal 5'-phosphate as a cofactor.

The protein resides in the cytoplasm. It catalyses the reaction (6R)-5,10-methylene-5,6,7,8-tetrahydrofolate + glycine + H2O = (6S)-5,6,7,8-tetrahydrofolate + L-serine. Its pathway is one-carbon metabolism; tetrahydrofolate interconversion. The protein operates within amino-acid biosynthesis; glycine biosynthesis; glycine from L-serine: step 1/1. Functionally, catalyzes the reversible interconversion of serine and glycine with tetrahydrofolate (THF) serving as the one-carbon carrier. This reaction serves as the major source of one-carbon groups required for the biosynthesis of purines, thymidylate, methionine, and other important biomolecules. Also exhibits THF-independent aldolase activity toward beta-hydroxyamino acids, producing glycine and aldehydes, via a retro-aldol mechanism. This chain is Serine hydroxymethyltransferase, found in Clostridium botulinum (strain Okra / Type B1).